The chain runs to 150 residues: MTLQLNTIALLLVILLILGVLSNNSTITISAAVLLIMQQTFLSSHIPLLEKYGVKIGIIILTIGVLSPLVSGKIQLPNLSGFVSWKMALSISVGVLVAWLAGKGVPLMGEQPILVTGLLIGTIIGVAFLGGIPVGPLIAAGILALFLGKI.

4 helical membrane-spanning segments follow: residues 1–21 (MTLQ…LGVL), 52–72 (YGVK…LVSG), 81–101 (GFVS…AWLA), and 123–143 (IIGV…AGIL).

This sequence belongs to the UPF0756 family.

The protein localises to the cell membrane. This is UPF0756 membrane protein CGSHiEE_06715 from Haemophilus influenzae (strain PittEE).